Reading from the N-terminus, the 453-residue chain is UPF0210 protein Mbur_0828 (453 aa).

This sequence belongs to the UPF0210 family.

This chain is UPF0210 protein Mbur_0828, found in Methanococcoides burtonii (strain DSM 6242 / NBRC 107633 / OCM 468 / ACE-M).